Consider the following 461-residue polypeptide: Steroidogenic factor 1 (461 aa).

The segment at residues 10–85 is a DNA-binding region (nuclear receptor); sequence DELCPVCGDK…VGMRLEAVRA (76 aa). Residues 13–33 form an NR C4-type zinc finger; that stretch reads CPVCGDKVSGYHYGLLTCESC. N6-acetyllysine occurs at positions 34, 38, and 72. The segment at 49 to 73 adopts an NR C4-type zinc-finger fold; sequence CTESQSCKIDKTQRKRCPFCRFQKC. The interval 116-158 is disordered; sequence NGFKLETGPPVGVPPPPPPPPDYMLPHGLHASEPKGLASGPPA. Lysine 119 participates in a covalent cross-link: Glycyl lysine isopeptide (Lys-Gly) (interchain with G-Cter in SUMO). Over residues 126–138 the composition is skewed to pro residues; it reads VGVPPPPPPPPDY. Lysine 194 participates in a covalent cross-link: Glycyl lysine isopeptide (Lys-Gly) (interchain with G-Cter in SUMO). Serine 203 bears the Phosphoserine; by CDK7 mark. The NR LBD domain maps to 222–459; sequence GVPELILQLL…NLLIEMLQAK (238 aa). The tract at residues 230 to 461 is important for dimerization; that stretch reads LLQLEPDEDQ…LIEMLQAKQT (232 aa). A 1,2-diacyl-sn-glycero-3-phosphocholine is bound by residues glycine 341, tyrosine 436, and lysine 440.

Belongs to the nuclear hormone receptor family. NR5 subfamily. As to quaternary structure, binds DNA as a monomer. Part of a complex consisting of SFPQ, NONO and NR5A1. Interacts with NR0B2. Interacts with DGKQ and CDK7. Binds to and activated by HIPK3. May be regulated by phosphorylation and dephosphorylation. Post-translationally, acetylation stimulates the transcriptional activity. In terms of processing, sumoylation reduces CDK7-mediated phosphorylation on Ser-203. Phosphorylated on Ser-203 by CDK7. This phosphorylation promotes transcriptional activity. Adrenal, ovary, testis, placenta, adipocyte, and brain.

The protein resides in the nucleus. Functionally, transcriptional activator. Seems to be essential for sexual differentiation and formation of the primary steroidogenic tissues. Binds to the Ad4 site found in the promoter region of steroidogenic P450 genes such as CYP11A, CYP11B and CYP21B. Also regulates the AMH/Muellerian inhibiting substance gene as well as the AHCH and STAR genes. 5'-YCAAGGYC-3' and 5'-RRAGGTCA-3' are the consensus sequences for the recognition by NR5A1. The SFPQ-NONO-NR5A1 complex binds to the CYP17 promoter and regulates basal and cAMP-dependent transcriptional activity. Binds phospholipids with a phosphatidylinositol (PI) headgroup, in particular PI(3,4)P2 and PI(3,4,5)P3. Activated by the phosphorylation of NR5A1 by HIPK3 leading to increased steroidogenic gene expression upon cAMP signaling pathway stimulation. The chain is Steroidogenic factor 1 (NR5A1) from Bos taurus (Bovine).